The sequence spans 1668 residues: Kinesin-like protein KIF21B (1668 aa).

In terms of domain architecture, Kinesin motor spans 8-371; that stretch reads CVKVAVRIRP…LKYANRARNI (364 aa). 87–94 contacts ATP; sequence GQTGAGKT. A coiled-coil region spans residues 372–465; sequence KNKVVVNQDK…LMSQEANLLL (94 aa). Residues 401–1100 form an interaction with TRIM3 region; sequence MEYKAGKRVI…LQALIYNVQH (700 aa). Disordered regions lie at residues 553–629 and 837–866; these read KKKE…PEEK and RVGL…GARS. The segment covering 579–628 has biased composition (acidic residues); the sequence is NSEETDENEAEEEEEERDESGCEEEEGREDEDEDSGSEESLVDSDSDPEE. The residue at position 580 (S580) is a Phosphoserine. Phosphothreonine is present on T583. Residues 847-866 show a composition bias toward low complexity; the sequence is SGAEVSASTTSSEAESGARS. A coiled-coil region spans residues 924-1019; the sequence is IIDIVMQRMT…TKEELDSTDT (96 aa). Phosphoserine occurs at positions 1150, 1168, and 1217. The span at 1199-1219 shows a compositional bias: polar residues; that stretch reads LPTRGSTFPRQSRGATDTSPL. The interval 1199–1253 is disordered; it reads LPTRGSTFPRQSRGATDTSPLTRRKSYDRGQPIRSTDMGFTPPSSPPTRPRNDRN. A Phosphothreonine modification is found at T1239. Residue S1243 is modified to Phosphoserine. WD repeat units follow at residues 1308-1345, 1348-1386, 1412-1450, 1453-1495, 1504-1541, 1545-1584, and 1587-1624; these read GHTK…EIAA, GHPN…KCIR, QGEH…PIGK, GHIG…TGTI, PHYD…LIQQ, AHKD…PIGE, and GHDS…TPCL.

Belongs to the TRAFAC class myosin-kinesin ATPase superfamily. Kinesin family. Interacts with TRIM3; the interaction positively affects motility of KIF21B. Interacts with GABARAP and GABA(A) receptor subunits: GABRG2, GABRA1 and GABRA2. May interact with GABA(A) receptor subunits: GABRB2 and GABRB3. As to expression, expressed in brain (at protein level). Expressed in spleen and at lower levels in testes.

The protein resides in the cytoplasm. It is found in the cytoskeleton. Its subcellular location is the cell projection. The protein localises to the dendrite. It localises to the growth cone. The protein resides in the axon. It is found in the cytoplasmic vesicle. Its function is as follows. Plus-end directed microtubule-dependent motor protein which displays processive activity. Is involved in regulation of microtubule dynamics, synapse function and neuronal morphology, including dendritic tree branching and spine formation. Plays a role in lerning and memory. Involved in delivery of gamma-aminobutyric acid (GABA(A)) receptor to cell surface. The sequence is that of Kinesin-like protein KIF21B (Kif21b) from Mus musculus (Mouse).